The following is a 364-amino-acid chain: D-alanine--D-alanine ligase (364 aa).

The region spanning 146–352 (KLCAMNAGIA…FAELVEKLLL (207 aa)) is the ATP-grasp domain. An ATP-binding site is contributed by 179–234 (TKRFDWPLFVKPASLGSSVGISKVRNAEELAAALENACGLDSKALVEAAISGREIE). The Mg(2+) site is built by Asp-305, Glu-319, and Asn-321.

The protein belongs to the D-alanine--D-alanine ligase family. Requires Mg(2+) as cofactor. The cofactor is Mn(2+).

The protein resides in the cytoplasm. The enzyme catalyses 2 D-alanine + ATP = D-alanyl-D-alanine + ADP + phosphate + H(+). It functions in the pathway cell wall biogenesis; peptidoglycan biosynthesis. Functionally, cell wall formation. The sequence is that of D-alanine--D-alanine ligase from Chlorobaculum tepidum (strain ATCC 49652 / DSM 12025 / NBRC 103806 / TLS) (Chlorobium tepidum).